Consider the following 206-residue polypeptide: Large ribosomal subunit protein uL4 (206 aa).

Residues 63-97 (MYKQKGTGRARHHSARAPQFRGGGKAHGPVVRSHE) are disordered. Over residues 64–77 (YKQKGTGRARHHSA) the composition is skewed to basic residues.

It belongs to the universal ribosomal protein uL4 family. Part of the 50S ribosomal subunit.

One of the primary rRNA binding proteins, this protein initially binds near the 5'-end of the 23S rRNA. It is important during the early stages of 50S assembly. It makes multiple contacts with different domains of the 23S rRNA in the assembled 50S subunit and ribosome. In terms of biological role, forms part of the polypeptide exit tunnel. This chain is Large ribosomal subunit protein uL4, found in Rhizobium johnstonii (strain DSM 114642 / LMG 32736 / 3841) (Rhizobium leguminosarum bv. viciae).